A 205-amino-acid polypeptide reads, in one-letter code: Beta-crystallin B2 (205 aa).

Residue Ala2 is modified to N-acetylalanine. The interval 2 to 16 (ASDHQTQAGKPQPLN) is N-terminal arm. Beta/gamma crystallin 'Greek key' domains follow at residues 17–56 (PKII…LVQA) and 57–101 (GPWV…RPIK). A connecting peptide region spans residues 102–106 (VDSQE). 2 consecutive Beta/gamma crystallin 'Greek key' domains span residues 107-148 (HKII…RVQS) and 149-191 (GTWV…RRIR). Residues 193 to 205 (MQWHQRGAFHPSN) form a C-terminal arm region.

It belongs to the beta/gamma-crystallin family. In terms of assembly, homo/heterodimer, or complexes of higher-order. The structure of beta-crystallin oligomers seems to be stabilized through interactions between the N-terminal arms.

Crystallins are the dominant structural components of the vertebrate eye lens. The chain is Beta-crystallin B2 (CRYBB2) from Canis lupus familiaris (Dog).